The following is a 569-amino-acid chain: Interleukin-1 receptor type 1 (569 aa).

The signal sequence occupies residues 1–17; the sequence is MKVLLRLICFIALLISS. Residues 18–336 are Extracellular-facing; that stretch reads LEADKCKERE…LIYPVTNFQK (319 aa). Disulfide bonds link Cys-23-Cys-104, Cys-44-Cys-96, Cys-121-Cys-164, and Cys-142-Cys-196. Ig-like C2-type domains follow at residues 23-110, 118-210, and 226-328; these read CKER…IKIS, PNLC…YPIT, and PVIV…IQLI. The N-linked (GlcNAc...) asparagine glycan is linked to Asn-100. Asn-193, Asn-233, Asn-249, Asn-263, and Asn-297 each carry an N-linked (GlcNAc...) asparagine glycan. The cysteines at positions 248 and 312 are disulfide-linked. The helical transmembrane segment at 337 to 356 threads the bilayer; that stretch reads HMIGICVTLTVIIVCSVFIY. The Cytoplasmic segment spans residues 357–569; that stretch reads KIFKIDIVLW…LQREAHVPLG (213 aa). Residues 383–538 enclose the TIR domain; the sequence is KTYDAYILYP…RFWKNVRYHM (156 aa). Glu-470 is a catalytic residue. A Phosphotyrosine modification is found at Tyr-496. Positions 540 to 569 are disordered; sequence VQRRSPSSKHQLLSPATKEKLQREAHVPLG. Over residues 556–569 the composition is skewed to basic and acidic residues; it reads TKEKLQREAHVPLG.

It belongs to the interleukin-1 receptor family. The interleukin-1 receptor complex is a heterodimer of IL1R1 and IL1RAP. Interacts with PIK3R1. Interacts with IL1A. In terms of processing, a soluble form (sIL1R1) is probably produced by proteolytic cleavage at the cell surface (shedding). Rapidly phosphorylated on Tyr-496 in response to IL-1, which creates a SH2 binding site for the PI 3-kinase regulatory subunit PIK3R1. As to expression, expressed in T-helper cell subsets. Preferentially expressed in T-helper 1 (Th1) cells.

It localises to the membrane. It is found in the cell membrane. Its subcellular location is the secreted. The catalysed reaction is NAD(+) + H2O = ADP-D-ribose + nicotinamide + H(+). Functionally, receptor for IL1A, IL1B and IL1RN. After binding to interleukin-1 associates with the coreceptor IL1RAP to form the high affinity interleukin-1 receptor complex which mediates interleukin-1-dependent activation of NF-kappa-B, MAPK and other pathways. Signaling involves the recruitment of adapter molecules such as TOLLIP, MYD88, and IRAK1 or IRAK2 via the respective TIR domains of the receptor/coreceptor subunits. Binds ligands with comparable affinity and binding of antagonist IL1RN prevents association with IL1RAP to form a signaling complex. Involved in IL1B-mediated costimulation of IFNG production from T-helper 1 (Th1) cells. The sequence is that of Interleukin-1 receptor type 1 (IL1R1) from Homo sapiens (Human).